A 364-amino-acid chain; its full sequence is Phosphoserine aminotransferase (364 aa).

Residue R46 coordinates L-glutamate. Pyridoxal 5'-phosphate-binding positions include 80–81, W106, T157, D176, and Q199; that span reads AR. K200 is subject to N6-(pyridoxal phosphate)lysine. 241-242 is a binding site for pyridoxal 5'-phosphate; it reads NT.

The protein belongs to the class-V pyridoxal-phosphate-dependent aminotransferase family. SerC subfamily. As to quaternary structure, homodimer. Requires pyridoxal 5'-phosphate as cofactor.

It is found in the cytoplasm. The catalysed reaction is O-phospho-L-serine + 2-oxoglutarate = 3-phosphooxypyruvate + L-glutamate. The enzyme catalyses 4-(phosphooxy)-L-threonine + 2-oxoglutarate = (R)-3-hydroxy-2-oxo-4-phosphooxybutanoate + L-glutamate. Its pathway is amino-acid biosynthesis; L-serine biosynthesis; L-serine from 3-phospho-D-glycerate: step 2/3. It functions in the pathway cofactor biosynthesis; pyridoxine 5'-phosphate biosynthesis; pyridoxine 5'-phosphate from D-erythrose 4-phosphate: step 3/5. Functionally, catalyzes the reversible conversion of 3-phosphohydroxypyruvate to phosphoserine and of 3-hydroxy-2-oxo-4-phosphonooxybutanoate to phosphohydroxythreonine. The chain is Phosphoserine aminotransferase from Vibrio parahaemolyticus serotype O3:K6 (strain RIMD 2210633).